A 324-amino-acid polypeptide reads, in one-letter code: Succinylglutamate desuccinylase (324 aa).

H53, E56, and H148 together coordinate Zn(2+). The active site involves E211.

This sequence belongs to the AspA/AstE family. Succinylglutamate desuccinylase subfamily. It depends on Zn(2+) as a cofactor.

It carries out the reaction N-succinyl-L-glutamate + H2O = L-glutamate + succinate. Its pathway is amino-acid degradation; L-arginine degradation via AST pathway; L-glutamate and succinate from L-arginine: step 5/5. Transforms N(2)-succinylglutamate into succinate and glutamate. The sequence is that of Succinylglutamate desuccinylase from Acinetobacter baumannii (strain AB0057).